The chain runs to 427 residues: Gamma-glutamyl phosphate reductase (427 aa).

It belongs to the gamma-glutamyl phosphate reductase family.

It localises to the cytoplasm. The enzyme catalyses L-glutamate 5-semialdehyde + phosphate + NADP(+) = L-glutamyl 5-phosphate + NADPH + H(+). Its pathway is amino-acid biosynthesis; L-proline biosynthesis; L-glutamate 5-semialdehyde from L-glutamate: step 2/2. In terms of biological role, catalyzes the NADPH-dependent reduction of L-glutamate 5-phosphate into L-glutamate 5-semialdehyde and phosphate. The product spontaneously undergoes cyclization to form 1-pyrroline-5-carboxylate. This is Gamma-glutamyl phosphate reductase from Rhizobium rhizogenes (strain K84 / ATCC BAA-868) (Agrobacterium radiobacter).